The sequence spans 431 residues: D-tagatose-1,6-bisphosphate aldolase subunit KbaZ (431 aa).

This sequence belongs to the GatZ/KbaZ family. KbaZ subfamily. As to quaternary structure, forms a complex with KbaY.

It participates in carbohydrate metabolism; D-tagatose 6-phosphate degradation; D-glyceraldehyde 3-phosphate and glycerone phosphate from D-tagatose 6-phosphate: step 2/2. Its function is as follows. Component of the tagatose-1,6-bisphosphate aldolase KbaYZ that is required for full activity and stability of the Y subunit. Could have a chaperone-like function for the proper and stable folding of KbaY. When expressed alone, KbaZ does not show any aldolase activity. This chain is D-tagatose-1,6-bisphosphate aldolase subunit KbaZ, found in Salmonella arizonae (strain ATCC BAA-731 / CDC346-86 / RSK2980).